A 59-amino-acid polypeptide reads, in one-letter code: Conotoxin Cl14.4 (59 aa).

A signal peptide spans 1–19; that stretch reads MKFLLFLSVALLLTSFIET. Positions 20-36 are excised as a propeptide; it reads VTVNKAGMERPSRALVG. I58 is modified (isoleucine amide).

In terms of processing, contains 2 disulfide bonds. In terms of tissue distribution, expressed by the venom duct.

It localises to the secreted. The polypeptide is Conotoxin Cl14.4 (Californiconus californicus (California cone)).